The primary structure comprises 689 residues: Glycine--tRNA ligase beta subunit (689 aa).

This sequence belongs to the class-II aminoacyl-tRNA synthetase family. Tetramer of two alpha and two beta subunits.

The protein localises to the cytoplasm. The enzyme catalyses tRNA(Gly) + glycine + ATP = glycyl-tRNA(Gly) + AMP + diphosphate. This chain is Glycine--tRNA ligase beta subunit, found in Glaesserella parasuis serovar 5 (strain SH0165) (Haemophilus parasuis).